The following is a 150-amino-acid chain: Ribonuclease H (150 aa).

An RNase H type-1 domain is found at 7-148 (ESNIVEIWTD…ADQLATKARM (142 aa)). Mg(2+)-binding residues include aspartate 16, glutamate 54, aspartate 76, and aspartate 140.

Belongs to the RNase H family. As to quaternary structure, monomer. Requires Mg(2+) as cofactor.

It localises to the cytoplasm. It catalyses the reaction Endonucleolytic cleavage to 5'-phosphomonoester.. In terms of biological role, endonuclease that specifically degrades the RNA of RNA-DNA hybrids. The chain is Ribonuclease H from Granulibacter bethesdensis (strain ATCC BAA-1260 / CGDNIH1).